We begin with the raw amino-acid sequence, 89 residues long: Cell division topological specificity factor (89 aa).

The protein belongs to the MinE family.

Functionally, prevents the cell division inhibition by proteins MinC and MinD at internal division sites while permitting inhibition at polar sites. This ensures cell division at the proper site by restricting the formation of a division septum at the midpoint of the long axis of the cell. The chain is Cell division topological specificity factor from Laribacter hongkongensis (strain HLHK9).